Reading from the N-terminus, the 147-residue chain is Calcium-regulated heat-stable protein 1 (147 aa).

Positions 1–12 (MSSEPPPPPQPP) are enriched in pro residues. Residues 1-52 (MSSEPPPPPQPPTHQASVGLLDTPRSRERSPSPLRGNVVPSPLPTRRTRTFS) form a disordered region. Residue Ser-2 is modified to N-acetylserine. A phosphoserine mark is found at Ser-30, Ser-32, and Ser-41. Thr-45 is modified (phosphothreonine). Residues Ser-52 and Ser-58 each carry the phosphoserine modification. In terms of domain architecture, CSD spans 62–129 (VYKGVCKCFC…KLQAVEVVIT (68 aa)). Phosphoserine occurs at positions 146 and 147.

Homodimer. Interacts with STYX. Dephosphorylated by calcineurin in a Ca(2+) dependent manner. Can be phosphorylated by DYRK2 (in vitro).

The protein localises to the cytoplasm. The protein resides in the P-body. It is found in the cytoplasmic granule. Binds mRNA and regulates the stability of target mRNA. Binds single-stranded DNA (in vitro). This Homo sapiens (Human) protein is Calcium-regulated heat-stable protein 1 (CARHSP1).